The following is a 621-amino-acid chain: METPIAEELAKKQKSISVAEFFEKNRQILGFDSAPRSLITTVKEAVDNALDACEEAGILPDILVQVERTGPDYVTVIIEDNGPGIVREQIPKVFAKLLYGSRFHALKQSRGQQGIGISAAVLYAQMTAGRHTKILSKTSPTAPAHYYELMINTSTNEPDILVDEVRDWFRPHGTQIELEMRAAYVKGRRQSIYEYLKATAIVNPHARITLIDPDGNEEVFERATDKMPEPAEEILPHPEGIELGTLMKMLHYTERQKLAPFLRYSFCKIGLLTAEEICKAAGLDPEIDPHALGRHEARKLIEAFEKVKIMAPPTDCLSPIGEDLIYRGLEKETTVDFIATSTRKPAVYSGNPFVVEVGMAYGGNLPKEEKISIMRFANRVPLLYQQGGCVTTHAVEDIKWKQYGLNQPGGGIPVGPVILLIHVASINVPFTSESKDAIADIPVIKEEIDLAIKEVARKLKHYLSKQSNLKKRREKEIIITKVLPKLAAKVAHVLEKDVPDINPVVAKIMGNLLVHRVIKNNGDGTVDVAIKVKNFGTSAYSFRVHEMLPCKVSGAKPEPKVVTMGNDYDYVWDISASAGSSKVLSYKIESASEEELQKLPQLIVEGIEEELVTGAKAFKGV.

Residues asparagine 48, aspartate 80, 101–102, 111–118, and lysine 435 each bind ATP; these read SR and GQQGIGIS.

This sequence belongs to the TOP6B family. Homodimer. Heterotetramer of two Top6A and two Top6B chains.

The catalysed reaction is ATP-dependent breakage, passage and rejoining of double-stranded DNA.. Relaxes both positive and negative superturns and exhibits a strong decatenase activity. This chain is Type 2 DNA topoisomerase 6 subunit B, found in Methanosarcina mazei (strain ATCC BAA-159 / DSM 3647 / Goe1 / Go1 / JCM 11833 / OCM 88) (Methanosarcina frisia).